A 267-amino-acid chain; its full sequence is tRNA pseudouridine synthase A (267 aa).

D53 functions as the Nucleophile in the catalytic mechanism. Residue Y114 participates in substrate binding.

This sequence belongs to the tRNA pseudouridine synthase TruA family. Homodimer.

The enzyme catalyses uridine(38/39/40) in tRNA = pseudouridine(38/39/40) in tRNA. Formation of pseudouridine at positions 38, 39 and 40 in the anticodon stem and loop of transfer RNAs. In Chlamydia trachomatis serovar L2b (strain UCH-1/proctitis), this protein is tRNA pseudouridine synthase A.